The following is a 797-amino-acid chain: N-acetylneuraminate (7)9-O-acetyltransferase (797 aa).

The Cytoplasmic segment spans residues 1–18 (MAALAYNLGKREINHYFS). The chain crosses the membrane as a helical span at residues 19-39 (VRSAKVLALVAVLLLAACHLA). Residues 40–313 (SRRYRGNDSC…QPRPPVTLIQ (274 aa)) lie on the Lumenal side of the membrane. An N-linked (GlcNAc...) asparagine glycan is attached at N46. S94 functions as the Acyl-ester intermediate in the catalytic mechanism. N175 and N187 each carry an N-linked (GlcNAc...) asparagine glycan. Residues D270 and H273 contribute to the active site. The chain crosses the membrane as a helical span at residues 314 to 334 (KLAACFFTLSIIGYLIFYIIH). Topologically, residues 335 to 363 (RNAHRKNKPCTDLESGEEKKNIINTPVSS) are cytoplasmic. Residues 364–384 (LEILLQSFCKLGLIMAYFYMC) traverse the membrane as a helical segment. Topologically, residues 385–395 (DRANLFMKENK) are lumenal. The chain crosses the membrane as a helical span at residues 396–416 (FYTHSSFFIPIIYILVLGVFY). Residues 417 to 439 (NENTKETKVLNREQTDEWKGWMQ) are Cytoplasmic-facing. A helical transmembrane segment spans residues 440 to 460 (LVILIYHISGASTFLPVYMHI). Residue R461 is a topological domain, lumenal. A helical membrane pass occupies residues 462 to 482 (VLVAAYLFQTGYGHFSYFWIK). At 483–486 (GDFG) the chain is on the cytoplasmic side. A helical transmembrane segment spans residues 487-507 (IYRVCQVLFRLNFLVVVLCIV). The Lumenal segment spans residues 508-513 (MDRPYQ). A helical membrane pass occupies residues 514–534 (FYYFVPLVTVWFMVIYVTLAL). Topologically, residues 535–547 (WPQIIQKKANGNC) are cytoplasmic. Residues 548–568 (FWHFGLLLKLGFLLLFICFLA) form a helical membrane-spanning segment. Residues 569 to 605 (YSQGAFEKIFSLWPLSKCFELKGNVYEWWFRWRLDRY) lie on the Lumenal side of the membrane. The chain crosses the membrane as a helical span at residues 606–626 (VVFHGMLFAFIYLALQKRQIL). Residues 627 to 638 (SEGKGEPLFSNK) are Cytoplasmic-facing. The helical transmembrane segment at 639-659 (ISNFLLFISVVSFLTYSIWAS) threads the bilayer. The Lumenal segment spans residues 660-671 (SCKNKAECNELH). A helical transmembrane segment spans residues 672 to 692 (PSVSVVQILAFILIRNIPGYA). Topologically, residues 693 to 698 (RSVYSS) are cytoplasmic. Residues 699-719 (FFAWFGKISLELFICQYHIWL) form a helical membrane-spanning segment. Topologically, residues 720–725 (AADTRG) are lumenal. The chain crosses the membrane as a helical span at residues 726 to 746 (ILVLIPGNPMLNIIVSTFIFV). Residues 747-770 (CVAHEISQITNDLAQIIIPKDNSS) lie on the Cytoplasmic side of the membrane. A helical membrane pass occupies residues 771–791 (LLKRLACIAAFFCGLLILSSI). Over 792–797 (QDKSKH) the chain is Lumenal.

Belongs to the PC-esterase family. CASD1 subfamily. Post-translationally, N-glycosylated. Highly expressed in peripheral B lymphocytes.

The protein resides in the golgi apparatus membrane. It carries out the reaction CMP-N-acetyl-beta-neuraminate + acetyl-CoA = CMP-N-acetyl-9-O-acetyl-beta-neuraminate + CoA. It catalyses the reaction a ganglioside GD3 (d18:1(4E)) + acetyl-CoA = a ganglioside Ac-O-7-GD3(d18:1(4E)) + CoA. The catalysed reaction is CMP-N-acetyl-beta-neuraminate + acetyl-CoA = CMP-N-acetyl-7-O-acetyl-beta-neuraminate + CoA. Key enzyme in the biosynthesis of O-acetylated (O-Ac) sialoglycans such as gangliosides O-AcGD3 and O-AcGD2, which affect various processes such as cell-cell interactions, host-pathogen recognition. Catalyzes the transfer of an acetyl group from a donor, the acetyl-coenzyme-A molecule (acetyl-CoA), to the C7/8/9 OH-position of a sialic acid residue. The primary site of O-acetyl group transfer on sialic acid seems to depend on cell type and can be C7, from which the O-acetyl group could subsequently migrate to the C8 and then to the C9 position, or at C9 with possibility of migrating to the C8 and then to the C7 position. Together with ST8SIA1 (GD3 synthase) it increases the levels of ganglioside Ac-O-7-GD3. Can transfer the acetyl group from acetyl-CoA to free sialate (N-acetylneuraminate, Neu5Ac) in vitro, but has preferred substrate specificity for CMP-activated sialate (CMP-Neu5Ac), resulting in the formation of 9-O-acetylated CMP-Neu5Ac (CMP-Neu5,9Ac2). CMP-Neu5,9Ac2 may be used by sialyltransferases as a sialate donor for glycoconjugate acceptors such as ganglioside GD3. O-acetylation at position C9 of ganglioside GD3 can counteract the pro-apoptotic effects of the ganglioside GD3 in tumor cells. The chain is N-acetylneuraminate (7)9-O-acetyltransferase from Homo sapiens (Human).